The sequence spans 227 residues: Cytidylate kinase (227 aa).

ATP is bound at residue 12 to 20 (GPSGAGKGT).

It belongs to the cytidylate kinase family. Type 1 subfamily.

Its subcellular location is the cytoplasm. The catalysed reaction is CMP + ATP = CDP + ADP. The enzyme catalyses dCMP + ATP = dCDP + ADP. The polypeptide is Cytidylate kinase (Sodalis glossinidius (strain morsitans)).